Consider the following 92-residue polypeptide: MGRSLKKGPFCDDHLMKKIEKLNETGQKQVIKTWSRRSTIFPQFIGHTIAVYDGRKHVPVYITEDMVGHKLGEFAPTRTYKGHAADDKKTKR.

Belongs to the universal ribosomal protein uS19 family.

Protein S19 forms a complex with S13 that binds strongly to the 16S ribosomal RNA. This is Small ribosomal subunit protein uS19 from Anoxybacillus flavithermus (strain DSM 21510 / WK1).